The sequence spans 861 residues: Glucans biosynthesis glucosyltransferase H (861 aa).

The next 6 membrane-spanning stretches (helical) occupy residues 142 to 162 (FILLLLMLAQTSVATYYMKGI), 188 to 208 (VLPYVIQFGILALFAILFCWV), 516 to 536 (VFLTGVMSYLSAPLWFFFLVL), 573 to 593 (LFSTTLTLLFLPKLLSVMLIW), 600 to 620 (FGGVIRVTLSMLLEMFFSVLL), and 683 to 703 (FLWWLSPIVGSLILSIPVSVI).

The protein belongs to the glycosyltransferase 2 family. OpgH subfamily.

It is found in the cell inner membrane. It participates in glycan metabolism; osmoregulated periplasmic glucan (OPG) biosynthesis. Its function is as follows. Involved in the biosynthesis of osmoregulated periplasmic glucans (OPGs). The sequence is that of Glucans biosynthesis glucosyltransferase H from Pseudomonas aeruginosa (strain UCBPP-PA14).